The following is a 1242-amino-acid chain: MPKTLTESEVEATFAKLKAADPDRKVDIIQFFGLQLEDVEELPASVIDPFLLILPPLIRSPHSLLLSSVLSSFLPYFLPLIPKHPTTHLRLALLQVLPALLEKLNDAKERIHSAAGNAIVILGELSWEAEPPIPASNLNSSGSLKAGSLSSSTATKSKPHETLPHLWERHLKDVLQGKAWRSKVEGMKVLTKMRSKEGAKMGLKAWLGVLVDLLEDGDGNVRDQARETVVELLSPPSTPPAARSEFKRLLVARNVRKTIADDIITRILSGEGSDRSTPAVMNSELGKEEGASRSGAAAPAHSQADDVDIVYVASPQDLEREFHSMLPFFEGKETEENWAPRERSIVRIRGMMKGQAHVKYQAAFIAGLKGGIVLSLRTTVAQQSCYLLKELPEGLGAAFDNFVEFLLPILGKMSGFTKKLIADRSQTAVTSIITHTTVHPRIFINHISSGIQEKNVQIRAYSVNHLKTFLIVHASHAKHQIEATPGLSDTLDAAFRKALADVNPGVREVTRQAFWRYHEVWRSKAEVLMNSLDGQARKQLEKANPRTAASPMPSYASSSSTGAPSSANTKPPSKKMDLKAMLAERRRAVKEAGKQAQETNAGSPRVVSNPVFASPGVQHASITGLPRSSSAVGIARHVETSSPSPVRSPTPSSSATRIRPSPSPERIQSPIQTKIEIDSPLRSRYTSLTPDLARSPPKSPSPSLSPSLGLGESPLRQVLTYPAANGRHSVGEGKRAIPELVEVADNGAEHEVDELTLKEGQKTRDDGNTDQELPPTVQEEVDQVEQSQQFESEPRLEHPEPQQGNTFSTSTSGRVPSTPARSIATGTTASLPNSRNGNIKGEKIISSRLNPEAFQTPLNPKTSALRSSSAIRTPAWKDSPRPEAVTPQMMQKLKERRHERSWWVKRQELLEKASPLKPLTPSPSFAILPDIEALELGAPTLKNLQKIALFCSSHPVRPEPTAEQDEEEKRAFEEEKRVWTGLFDRVMNGVVDFLRPDKDKELLEQGLVVLWEIVQHQWPLVDDTQRLCHGLFRLRESSDAVVLESTNALISLLVQISDPMLLLCNLRSSLDRFLTKHPAPPSSSADNSDPMTSALSQLSLSSSKESPEKRTRNSGYLFGLTSIGMCVLRLSAPVIVSEGPKLGQIVMEAINDPSSIIRQAAHSLLLAIQCVTHDSRKTLAFVPAMSQGQKDLAVYYMAQNGVLEQIGLHKKATSEGEKGREGDRDNMTGELAGLMSRGVIRE.

2 stretches are compositionally biased toward low complexity: residues 138–156 and 548–567; these read LNSS…TATK and AASP…PSSA. Disordered regions lie at residues 138 to 161, 538 to 612, 637 to 711, 748 to 839, 853 to 884, and 1077 to 1111; these read LNSS…KPHE, KQLE…NPVF, HVET…LGLG, AEHE…NGNI, AFQT…RPEA, and HPAP…EKRT. Over residues 574 to 593 the composition is skewed to basic and acidic residues; the sequence is KKMDLKAMLAERRRAVKEAG. Composition is skewed to low complexity over residues 640–660 and 701–711; these read TSSP…RIRP and SPSLSPSLGLG. The segment covering 748-767 has biased composition (basic and acidic residues); the sequence is AEHEVDELTLKEGQKTRDDG. Polar residues-rich tracts occupy residues 802-815, 824-837, and 856-871; these read QQGN…SGRV, ATGT…SRNG, and TPLN…SSAI. The span at 1082 to 1104 shows a compositional bias: low complexity; the sequence is SSSADNSDPMTSALSQLSLSSSK.

Belongs to the CLASP family. As to quaternary structure, interacts with microtubules.

The protein localises to the cytoplasm. The protein resides in the cytoskeleton. Its subcellular location is the nucleus. It localises to the spindle. In terms of biological role, microtubule binding protein that promotes the stabilization of dynamic microtubules. Required for mitotic spindle formation. The polypeptide is Protein STU1 (STU1) (Cryptococcus neoformans var. neoformans serotype D (strain B-3501A) (Filobasidiella neoformans)).